A 226-amino-acid polypeptide reads, in one-letter code: uncharacterized protein (226 aa).

The region spanning Met1–Ile112 is the Response regulatory domain. Asp48 bears the 4-aspartylphosphate mark. The ompR/PhoB-type DNA-binding region spans Asn126–Glu225.

Post-translationally, phosphorylated by YcbM.

It localises to the cytoplasm. Functionally, member of the two-component regulatory system YcbM/YcbL. This is an uncharacterized protein from Bacillus subtilis (strain 168).